The following is a 248-amino-acid chain: ATP synthase subunit a, chloroplastic (248 aa).

5 helical membrane passes run 38–58, 96–116, 135–155, 200–220, and 221–241; these read QVLI…TIAV, VPFI…GALL, INTT…AGLA, LVVA…VMFL, and GLFT…AYIG.

This sequence belongs to the ATPase A chain family. F-type ATPases have 2 components, CF(1) - the catalytic core - and CF(0) - the membrane proton channel. CF(1) has five subunits: alpha(3), beta(3), gamma(1), delta(1), epsilon(1). CF(0) has four main subunits: a, b, b' and c.

Its subcellular location is the plastid. It localises to the chloroplast thylakoid membrane. In terms of biological role, key component of the proton channel; it plays a direct role in the translocation of protons across the membrane. This Cycas taitungensis (Prince sago) protein is ATP synthase subunit a, chloroplastic.